A 255-amino-acid polypeptide reads, in one-letter code: Small ribosomal subunit protein uS2 (255 aa).

The interval 230–255 (QGSSGRDLGASSEVPVEPALEEAAEG) is disordered.

It belongs to the universal ribosomal protein uS2 family.

In Rhizobium johnstonii (strain DSM 114642 / LMG 32736 / 3841) (Rhizobium leguminosarum bv. viciae), this protein is Small ribosomal subunit protein uS2.